The sequence spans 67 residues: Small ribosomal subunit protein eS27 (67 aa).

Cysteine 22, cysteine 25, cysteine 41, and cysteine 44 together coordinate Zn(2+). The C4-type zinc-finger motif lies at 22–44 (CPDCGNEQVVFSHAAMVVRCLVC).

It belongs to the eukaryotic ribosomal protein eS27 family. Part of the 30S ribosomal subunit. It depends on Zn(2+) as a cofactor.

This Pyrobaculum islandicum (strain DSM 4184 / JCM 9189 / GEO3) protein is Small ribosomal subunit protein eS27.